A 381-amino-acid polypeptide reads, in one-letter code: GDP-mannose-dependent monoacylated alpha-(1-6)-phosphatidylinositol monomannoside mannosyltransferase (381 aa).

GDP-alpha-D-mannose contacts are provided by arginine 206, lysine 211, leucine 261, and glutamate 298.

Belongs to the glycosyltransferase group 1 family. Glycosyltransferase 4 subfamily.

It carries out the reaction a 1,2-diacyl-sn-glycero-3-phospho-[alpha-D-mannopyranosyl-(1&lt;-&gt;6)-D-myo-inositol] + GDP-alpha-D-mannose = a 2,6-O-bis(alpha-D-mannopyranosyl)-1-phosphatidyl-1D-myo-inositol + GDP + H(+). It catalyses the reaction a 1,2-diacyl-sn-glycero-3-phospho-[alpha-D-6-acyl-mannopyranosyl-(1&lt;-&gt;6)-D-myo-inositol] + GDP-alpha-D-mannose = a 2-O-(alpha-D-mannosyl)-6-O-(6-O-acyl-alpha-D-mannosyl)-1-phosphatidyl-1D-myo-inositol + GDP + H(+). It functions in the pathway phospholipid metabolism; phosphatidylinositol metabolism. Involved in the biosynthesis of phosphatidyl-myo-inositol mannosides (PIM) which are early precursors in the biosynthesis of lipomannans (LM) and lipoarabinomannans (LAM). Catalyzes the addition of a mannosyl residue from GDP-D-mannose (GDP-Man) to the position 6 of a phosphatidyl-myo-inositol bearing an alpha-1,2-linked mannose residue (PIM1) to generate phosphatidyl-myo-inositol bearing alpha-1,2- and alpha-1,6-linked mannose residues (Ac1PIM2). PimB also catalyzes the addition of a mannosyl residue from GDP-Man to the position 6 of phosphatidyl-myo-inositol bearing an acylated alpha-1,2-linked mannose residue (Ac1PIM1) to generate monoacylated phosphatidyl-myo-inositol bearing alpha-1,2- and alpha-1,6-linked mannose residues (Ac1PIM2). The addition of the second mannosyl residue by PimB preferentially occurs before the acylation of the mannosyl residue transferred by PimA. Also able to transfer a mannosyl residue from GDP-Man to the position 6 of a phosphatidyl-myo-inositol (PI), but this reaction is very slow. The polypeptide is GDP-mannose-dependent monoacylated alpha-(1-6)-phosphatidylinositol monomannoside mannosyltransferase (Corynebacterium glutamicum (strain ATCC 13032 / DSM 20300 / JCM 1318 / BCRC 11384 / CCUG 27702 / LMG 3730 / NBRC 12168 / NCIMB 10025 / NRRL B-2784 / 534)).